A 91-amino-acid polypeptide reads, in one-letter code: Large ribosomal subunit protein uL23c (91 aa).

This sequence belongs to the universal ribosomal protein uL23 family. Part of the 50S ribosomal subunit.

It localises to the plastid. It is found in the chloroplast. In terms of biological role, binds to 23S rRNA. This is Large ribosomal subunit protein uL23c (rpl23) from Chaetosphaeridium globosum (Charophycean green alga).